The primary structure comprises 600 residues: KIF-binding protein (600 aa).

Residues 384-434 (KAENEATEYSKIMQDYAEAYEHIAFFEENPENQAKMQKRRAKYLEDLLDLL) are a coiled coil.

Belongs to the KIF-binding protein family.

It is found in the cytoplasm. The protein resides in the cytoskeleton. The chain is KIF-binding protein from Drosophila melanogaster (Fruit fly).